The sequence spans 359 residues: Cell division protein ZipA (359 aa).

At methionine 1–asparagine 4 the chain is on the periplasmic side. Residues threonine 5–serine 25 traverse the membrane as a helical segment. Residues asparagine 26 to lysine 359 are Cytoplasmic-facing. The disordered stretch occupies residues proline 78 to proline 101.

It belongs to the ZipA family. As to quaternary structure, interacts with FtsZ via their C-terminal domains.

The protein resides in the cell inner membrane. Its function is as follows. Essential cell division protein that stabilizes the FtsZ protofilaments by cross-linking them and that serves as a cytoplasmic membrane anchor for the Z ring. Also required for the recruitment to the septal ring of downstream cell division proteins. This chain is Cell division protein ZipA, found in Mannheimia succiniciproducens (strain KCTC 0769BP / MBEL55E).